A 253-amino-acid chain; its full sequence is Imidazole glycerol phosphate synthase subunit HisF (253 aa).

Residues D11 and D130 contribute to the active site.

The protein belongs to the HisA/HisF family. As to quaternary structure, heterodimer of HisH and HisF.

It localises to the cytoplasm. The catalysed reaction is 5-[(5-phospho-1-deoxy-D-ribulos-1-ylimino)methylamino]-1-(5-phospho-beta-D-ribosyl)imidazole-4-carboxamide + L-glutamine = D-erythro-1-(imidazol-4-yl)glycerol 3-phosphate + 5-amino-1-(5-phospho-beta-D-ribosyl)imidazole-4-carboxamide + L-glutamate + H(+). The protein operates within amino-acid biosynthesis; L-histidine biosynthesis; L-histidine from 5-phospho-alpha-D-ribose 1-diphosphate: step 5/9. In terms of biological role, IGPS catalyzes the conversion of PRFAR and glutamine to IGP, AICAR and glutamate. The HisF subunit catalyzes the cyclization activity that produces IGP and AICAR from PRFAR using the ammonia provided by the HisH subunit. The protein is Imidazole glycerol phosphate synthase subunit HisF of Acidobacterium capsulatum (strain ATCC 51196 / DSM 11244 / BCRC 80197 / JCM 7670 / NBRC 15755 / NCIMB 13165 / 161).